A 122-amino-acid polypeptide reads, in one-letter code: Small ribosomal subunit protein uS12 (122 aa).

A disordered region spans residues 1-24; sequence MPTINQLIRKKRKSTGKKRTAPAL. Residues 8-20 show a composition bias toward basic residues; it reads IRKKRKSTGKKRT. The residue at position 89 (aspartate 89) is a 3-methylthioaspartic acid.

The protein belongs to the universal ribosomal protein uS12 family. In terms of assembly, part of the 30S ribosomal subunit. Contacts proteins S8 and S17. May interact with IF1 in the 30S initiation complex.

Functionally, with S4 and S5 plays an important role in translational accuracy. Interacts with and stabilizes bases of the 16S rRNA that are involved in tRNA selection in the A site and with the mRNA backbone. Located at the interface of the 30S and 50S subunits, it traverses the body of the 30S subunit contacting proteins on the other side and probably holding the rRNA structure together. The combined cluster of proteins S8, S12 and S17 appears to hold together the shoulder and platform of the 30S subunit. The polypeptide is Small ribosomal subunit protein uS12 (Natranaerobius thermophilus (strain ATCC BAA-1301 / DSM 18059 / JW/NM-WN-LF)).